We begin with the raw amino-acid sequence, 69 residues long: DNA-directed RNA polymerase subunit omega (69 aa).

The protein belongs to the RNA polymerase subunit omega family. In terms of assembly, the RNAP catalytic core consists of 2 alpha, 1 beta, 1 beta' and 1 omega subunit. When a sigma factor is associated with the core the holoenzyme is formed, which can initiate transcription.

It catalyses the reaction RNA(n) + a ribonucleoside 5'-triphosphate = RNA(n+1) + diphosphate. In terms of biological role, promotes RNA polymerase assembly. Latches the N- and C-terminal regions of the beta' subunit thereby facilitating its interaction with the beta and alpha subunits. The sequence is that of DNA-directed RNA polymerase subunit omega from Heliobacterium modesticaldum (strain ATCC 51547 / Ice1).